The chain runs to 235 residues: 2,3,4,5-tetrahydropyridine-2,6-dicarboxylate N-acetyltransferase (235 aa).

This sequence belongs to the transferase hexapeptide repeat family. DapH subfamily.

The catalysed reaction is (S)-2,3,4,5-tetrahydrodipicolinate + acetyl-CoA + H2O = L-2-acetamido-6-oxoheptanedioate + CoA. Its pathway is amino-acid biosynthesis; L-lysine biosynthesis via DAP pathway; LL-2,6-diaminopimelate from (S)-tetrahydrodipicolinate (acetylase route): step 1/3. Its function is as follows. Catalyzes the transfer of an acetyl group from acetyl-CoA to tetrahydrodipicolinate. In Anoxybacillus flavithermus (strain DSM 21510 / WK1), this protein is 2,3,4,5-tetrahydropyridine-2,6-dicarboxylate N-acetyltransferase.